A 186-amino-acid polypeptide reads, in one-letter code: 3-hydroxyanthranilate 3,4-dioxygenase (186 aa).

Arg44 provides a ligand contact to O2. Residues His48, Glu54, and His96 each coordinate Fe cation. Residue Glu54 participates in substrate binding. Residues Arg100 and Glu110 each coordinate substrate. Residues Cys125, Cys130, Cys164, and Cys167 each contribute to the a divalent metal cation site.

This sequence belongs to the 3-HAO family. It depends on Fe(2+) as a cofactor.

The protein localises to the cytoplasm. It carries out the reaction 3-hydroxyanthranilate + O2 = (2Z,4Z)-2-amino-3-carboxymuconate 6-semialdehyde. Its pathway is cofactor biosynthesis; NAD(+) biosynthesis; quinolinate from L-kynurenine: step 3/3. Catalyzes the oxidative ring opening of 3-hydroxyanthranilate to 2-amino-3-carboxymuconate semialdehyde, which spontaneously cyclizes to quinolinate. The protein is 3-hydroxyanthranilate 3,4-dioxygenase of Chaetomium globosum (strain ATCC 6205 / CBS 148.51 / DSM 1962 / NBRC 6347 / NRRL 1970) (Soil fungus).